The sequence spans 195 residues: Oocyte-secreted protein 3 (195 aa).

Residues 1–21 (MKAFVASGLLLLIFGMWRCSG) form the signal peptide. Asn102 carries an N-linked (GlcNAc...) asparagine glycan.

The protein belongs to the PLAC1 family. In terms of tissue distribution, oocyte-specific.

It is found in the secreted. In Mus musculus (Mouse), this protein is Oocyte-secreted protein 3.